Consider the following 118-residue polypeptide: UPF0344 protein YisL (118 aa).

4 helical membrane-spanning segments follow: residues 4–24 (LHIT…SLYS), 33–53 (ITHM…AELF), 62–82 (EYAG…MLLI), and 93–113 (LWVG…HLPI).

It belongs to the UPF0344 family.

It localises to the cell membrane. This chain is UPF0344 protein YisL (yisL), found in Bacillus subtilis (strain 168).